Here is a 348-residue protein sequence, read N- to C-terminus: Putative transport protein HI_0338 (348 aa).

A run of 9 helical transmembrane segments spans residues 7–27, 28–48, 60–80, 139–159, 196–216, 223–243, 245–265, 267–287, and 296–316; these read LHRTLLGIAAVIIILAGVKLA, AEIVVPFLLSLFIAIICSPII, LAITLLFVLISLVFFFLVGLI, VLLNFSGVVSNVFVLVLVVIF, VIGYLGIKSITSLLTGVGVFI, VQYAILWATLSFLLNYIPNIG, IIAAIPIIVQALLLNGFGIGF, VAIGVIAINMVVGNIIEPKMM, and LVVFLSLLFWGWLLGTVGMLL.

Belongs to the autoinducer-2 exporter (AI-2E) (TC 2.A.86) family.

It is found in the cell membrane. The chain is Putative transport protein HI_0338 from Haemophilus influenzae (strain ATCC 51907 / DSM 11121 / KW20 / Rd).